Reading from the N-terminus, the 369-residue chain is Flagellar P-ring protein 1 (369 aa).

A signal peptide spans 1-23 (MRKQSLVTLLMVLLSLVWLPASA).

The protein belongs to the FlgI family. As to quaternary structure, the basal body constitutes a major portion of the flagellar organelle and consists of four rings (L,P,S, and M) mounted on a central rod.

The protein resides in the periplasm. It localises to the bacterial flagellum basal body. Functionally, assembles around the rod to form the L-ring and probably protects the motor/basal body from shearing forces during rotation. The protein is Flagellar P-ring protein 1 of Yersinia pseudotuberculosis serotype I (strain IP32953).